Here is a 121-residue protein sequence, read N- to C-terminus: Large-conductance mechanosensitive channel (121 aa).

A run of 2 helical transmembrane segments spans residues 14–34 (VLDLAVGVIIGAAFTALVKSL) and 67–87 (GAFLNDVINFVITAFVIFVLI).

Belongs to the MscL family. As to quaternary structure, homopentamer.

The protein localises to the cell membrane. Functionally, channel that opens in response to stretch forces in the membrane lipid bilayer. May participate in the regulation of osmotic pressure changes within the cell. This chain is Large-conductance mechanosensitive channel, found in Lactococcus lactis subsp. cremoris (strain SK11).